A 217-amino-acid chain; its full sequence is Pyridoxine/pyridoxamine 5'-phosphate oxidase (217 aa).

Substrate-binding positions include 13–16 and Lys-71; that span reads RREY. FMN is bound by residues 66–71, 81–82, Arg-87, Lys-88, and Gln-110; these read RIVLLK and YT. Positions 128, 132, and 136 each coordinate substrate. FMN contacts are provided by residues 145–146 and Trp-190; that span reads QS. 196–198 provides a ligand contact to substrate; that stretch reads RLH. Arg-200 is an FMN binding site.

The protein belongs to the pyridoxamine 5'-phosphate oxidase family. In terms of assembly, homodimer. Requires FMN as cofactor.

It catalyses the reaction pyridoxamine 5'-phosphate + O2 + H2O = pyridoxal 5'-phosphate + H2O2 + NH4(+). It carries out the reaction pyridoxine 5'-phosphate + O2 = pyridoxal 5'-phosphate + H2O2. The protein operates within cofactor metabolism; pyridoxal 5'-phosphate salvage; pyridoxal 5'-phosphate from pyridoxamine 5'-phosphate: step 1/1. It functions in the pathway cofactor metabolism; pyridoxal 5'-phosphate salvage; pyridoxal 5'-phosphate from pyridoxine 5'-phosphate: step 1/1. Catalyzes the oxidation of either pyridoxine 5'-phosphate (PNP) or pyridoxamine 5'-phosphate (PMP) into pyridoxal 5'-phosphate (PLP). This chain is Pyridoxine/pyridoxamine 5'-phosphate oxidase, found in Serratia proteamaculans (strain 568).